The primary structure comprises 5101 residues: MSRFSCIFPTLTDGYVPNPDHTRAAGRRTYRIDLSGWKAPGSETESLILAAWGLVLSSYVGTDEVAFYVVPTTGPDTTALAELKVEGDMPRQSLTYAAHQLLHPGLVGAGQVSGETANTIITFANDIESLFVTQTEESFLSLHVYRDEQGHISLSLTYYLSLLTDAQAANVGTAMAQALAEVGTCDNDKLVKDLSLMSPAHLEHIWRFNADVPGIWEECFHDVIERHAANRPHSLAVDAWDTELTYTDLVREARLLAAYLQRRGVGPGSVVPISFERSGAALVAMLAVSKAGGAFVSVPPNLPAGRVDAILEVIEAPFVVTWTKYESFWAERLPTLPIDNYPKPAADATVEALGKPEDLFYVIFTSGSTGRPKGCMLSHTNWLNGALRNAPSWKYGPESRVLQMLSHTFDMSLLEICTSLGSGSCVCVPRPEEIETSISDAINRWQVNHVIMTPSLARALRPDDVPGLKTMCLGGEAFPKEIVTMWSERINLWQFYGPSECSINSSSWPITRPDADPLNIGPPNSAACWVVDVHDYNKLVPVGAIGELLVSGPIVGMGYLKNPVKTAEAFLEEVGFVAKDDPQFGGFRFYRTGDLVRWNSDGTITFCGRADTQVKLNGQRLELAEVEYQLGLEAGVQYAIAMAPQAGLCKNNLIAILTVKGTSTGTQDTAADEIPLLDRRDPIVQETVKKLRSQLQHALPRYMVPTIWAFVGRMPMSASGKIDRVKLRDWVQRMSQETFDAITGRSLEAEEHAFGLSRLEQKIQLAWAEALGLSAAEVGLQQPFVALGGDSIKALDAVARCRARQIKISMVHILSCEGVREAASLAEVQETPAQQVAEMAVDYSNLWTRLSNDYDLDKLGVTQVEEVEDVFPCTTMQEGMFLGQIRRPGAYHMRFFHRVQLKGGCLPTVERIQQAWASLVERHPSLRTVFVDDLSPEAIYHSIVLRSVPMEVRMREVPRDLSAEAALAIFTEELVPFRANAPLHRMLLLTCRGRVPYLMLEISHVIMDGYALSVFRREFIRACSSSAPLPRGPDYRMFANYHRTRQTDDSARYWTDYLADCVPCHIPTHAVSAPSDGPPEWPRTLQRRDFGFENSAAFLQRCKERQVTLACAIRAAWALVLRAYTQSEDVCFGYVSSGRNVPVPEVETIFGLCLSMQVCRARLSEASTIASLARKIQEDYVASLPFQHYPLAEAQRGLKQTHGQGLFNTAISMEWVPPSAEDEDALLDLEEIREQDDPTEYDIAISVDVHEGHIKLGFLYWPDLTDFEINHLAEALHGAMNCFASHPDEALNTLSLLQASDVCSALSDGPTLLPLEAVRGNVVSMIDRWVTRQPEGAAIDGWDGSMSYKELHEQSSWVARNLLHQGVRLGDRVLVCADRSSRTVATILGIVRAGCVLVLSNPTDPEKRLQWLAKKCNASLVVADPTYEERLATADAHVLSTTSVCAPAAWDYEFPALDEHDLISILFKSGSTGTPKGILMEHGALATSVFLGHGRTLRFSRHTRMLHFASLTFDAALAEIFTTLAHGGCICVPCEEDRLSDVPGCISRFAVNTAMLTPSVGRLLDPGALPTLQTLIMVGEPMSRLDVERFAPVLDLYNGAGPTETSIMVTIAGPMKPTDEPVNLGYAVAGVRLWVTEAENPNRLAPLGAVGELIVEGRLVTSGYLDDQARTQEAFLPTLPWLPSQHALYRTGDLVRYVDDGSLRYMGRKDTQVKLRGQRIELQEVEYHLRKSLQQAQIVVEMVVPAGKMRAQASLVAFVSGLTAADVESSSACNLEGTIPISQIVLPKSAFQALEEVLPRHMIPSVYYALDTIPLSVNGKADRRRLREMGSLLLASSAAHKNNIEGMSKSVKWTPTLELERTLLGLWAATLGLEAETIHGDDSFFELGGDSVSAMKLVATARDKYKLSLSVPQMFRYPTVCQLAAEVGEPAGQSASSASSTTEEGFTFSTPDDSSTNDGVDDDFLQLATAQLAQLAQEKGKKVDIAALLKQLQGGSSSNKTPSVSSSSSSSSSSKRKKNAAKAESLAEAAAPIPVQFSLLDGGADALDKVRAQAVEHCKITHDDIEDIYPATALQEGMMALTARTPGVYTTTLTGDLSEQVDIARLQYAWGKAAEAHPILRTRIILTDNNTAVQVVQRAKGLPWDTYSLREDNVLPDLTSNMTSGSPLLRLAVVHRQSQPRMLLVAIHHALYDGWSMPLLKQAVEDAYHGRDLRPQPFTPFIKHLIAGKPAAQDFWTTHLDNFVGGVFPKLPSIYHQIQPTERRTRSMTLPTAAPKAQYTMATKIQAAWAVTVSRYVEANDIVFGTVSTGRSAPVPAIDRMVGPTVTTVPVRISLGGQADRVLSLLQRVQEDSWNKLDHEHLGLQHIRRLGESAAAACNFQTLLVIQPREQPDTKYRSTLLSGLQDVAELEGVDTYPLMLVCEPDGASLNLTAVFDRAVLDGATLDRMLAHWELVLTQMWNEPNMAVIDIDAVSCSDKETLMRWNTGETITEGCAHNAVCEWSRRTPHAPAVCAWDGEWTYKELERYSSLIASQISAHGLSSGDFVALYHEKSRWTAAGILAVFKAGAILITLDPAHPTDRIKDILDQARPRLILTSQSLLDVARNLDTPVLSVQFAASQPLPEEWSSLPTICPTLAAYAPFTSGSTGRPKGIPLDHRGLAASTASIARSCLLRPASRVLHFASFAFDASMMEHLIAWHAGGCLCIPDETARQTDLAKCIRDFNVTWAFLTPSCLRLITPDDVPSLQALGLGGESMTSEDITIWSPRLRQIVQLYGPAECCIVAALTEVTKPSENRLIGRPNACRCWVVDPQNPDRLAPIGAVGELLIEGITVGRGYINDPDRTTPAFIRPPKWLQTLYPDDQEPKRLYRTGDLVRYAGVDGKLAFIGRRDGQLKLHGQRIELADVEAHLRSLIPGMQKMVVEMVHSADNQNPFLAAFLEEISTSQKPKEREIGLLHPSQSQCALDVKAIDSALSRTVPQYMIPSMYLHISRLPLSASGKLDRRHLREMVAELPRQSLNEYAAGSGLGVPDRPVTSQEHEMQAIWARVLSLDPNTFGVNDDFFRIGGDSISGMQVSTKCNAAGIHITSADLFRHRTIEQLICHLNTIRTTDSASVLLPTEPVNEWVALAPIQHLFFEVAPEGPNHFNQSLLLRTSRRVSVEELAGGLDVLIGRHSMLRARFCRKDSGQWFQQVKSLDSEPASAFYRLAAHNHITRESLPTLFTAAQMALSIEDGPLLTVDLVELEDGSQLVYLAAHHLIIDLVSWRILHGDLEEYLQTGSLSSATGSVPFLTWTQLQAEYSAEHLTPARALPGFQEANDDFDFMRYWGISSESNTFGQTSTSRFALDRTVTDILFGSANKVMDTRPVEILEAALWYSCNQALPDHPGPSIYVEGHGREPWTDSIDVSGTVGWFTIMSPLVSTPWHHLSRKSMRDFVDVLSYIKDQRRRIPANGWAYFTSRYLNDEGRVAYGRTKPVMEVLFNYMGQYQEMKREDAILQLAGDDIQSGTGASDIAGNVPRFSLIDVTAFTANGCLTFEFTFPQLIQQDARLEQCIKECEHTLVAAASSLSAEGPRKTLTDFPLMSALTYDQLSQCLNHTLPSMGLRAQDVWNIYPCSPVQRGMLLAQLRDRQAYQQRFKFQVMSRGPTEQLSLEKVKDAWTEVINRHDILRTLLLPVSDHSHFDQVVMVPGSLQHLVRGDAMDANPTEGLPHTINITSDSTGAIICEWNVSHALVDAMSIAFIQREVNQALEGSLGQHQNLPQYVEYIKWLTLQDNTEAQAYWQNHLNGVEPCLFPKLTSSPDKVNPEATISAIRATWSRDVRMDELCHKHAITLTNLFHIVWAIVLGAYVGTDEVCFGYTALGRDVPVHRVETLVGPLVNVLATTVRHQEDETILNALLTHQAHLTNSLQHQHYALADVYASLGLVGSQLFNTIVSLQDTSHFDAPDEQRTRLEMLPANDVSEYDVALNIGVDKSTIQLVCSYQTVSLSAEQADALLRTAFHVLDEILRDPTQRFCELEVISPKCKEHLVKWNAGMLAPTHEYIHEKIQGQCRIHNSRQAVCAWDGMFTYAEVDDLSSRLAARLIRMGVTSEDIIPIYSPKSRWMVIAILGVLKAGAAFTLLEISHPMARLRVICNQIKAPMLIAPASHAVPAANLAPILVVLDNITSLAEERPVSLPAVDIPPAREALAYLIFTSGSTGNPKGVMVTHQNLCSNASIITTSVNMTSDSRVLQFASHAFDGCLWEILGALLAGACLIIPSESENKEDLTGCIERMGVTWAFLTPSVARILKPETLPSLCNLVLGGEPIAASDLEMWRGHVQVVCAYGPTETTILASTTSPSTFPRDGKDIGTPTSSSLWIVDTRNYQTLVPLGATGELLIEGPNVSQGYLGDPEKTNNAFPDAPRWLSQLRKSPTRLYRTGDLVRFDTSTGTIRFVGRKDNQIKFHGQRIELGEIEYHAQFAFSSASTVIVDLITPEQPRQPYIVAFVHQLDAANETTDTNDTLLLPSSEVFRADALAAQNKMHKRLPHYMVPAVFLPLHRLPLSVTGKADRKRLRQCALALSSPELSAYRATASTKRMPSTAAERKMQELVATVLGRDPTEIGMDDSFFYLGGDSVQAMRLVAEGRQQGLTLSLRAIFDSPCLGDLSDQAKSLIEDNQRASTASRGNLRYDCDRIDKIVVTNSLNKADVVDVLPTTSFQRHWLDAQLKSYIVVDIPGPIDPARLLRAMHRVVEAHPILRVSFVPYETTTVQVILRTAVAITNVDLSTATVEELCRRDVDAQMAPGVPYLRVIIATQDKAGHKLIMRLSHAQYDAVSLSLLMNDLSHAYANDTHPLPSSHFPRFNDYITYQQAQRADPTATTFWRHLLQDVPLTHLNLQPAESSASNGTPITLSRDIDIAVFPSLPSDITIATMVKAAWSLALAQKTNSLAVIFGQVVHGRAIALPGVEGIVGPCANITPVVARLGLETTGLELMQALQDQHHSAMSYESVDLDDALAYANDSQAGRKGLQTIVQHQNNVMVDDMELSLGEVKCGVDFRAVDHLPKEVWVYSSVDEKRPGMLEVKIMSSTLVLGEEFAEELMGLLVEKIVGLLRHPESVCV.

The segment at 225 to 616 is adenylation 1; that stretch reads ERHAANRPHS…CGRADTQVKL (392 aa). One can recognise a Carrier 1 domain in the interval 757–830; sequence SRLEQKIQLA…EAASLAEVQE (74 aa). O-(pantetheine 4'-phosphoryl)serine is present on Ser791. The interval 868–1299 is condensation 1; that stretch reads EDVFPCTTMQ…ALNTLSLLQA (432 aa). The segment at 1327 to 1716 is adenylation 2; the sequence is DRWVTRQPEG…GRKDTQVKLR (390 aa). One can recognise a Carrier 2 domain in the interval 1854–1931; sequence TPTLELERTL…QLAAEVGEPA (78 aa). An O-(pantetheine 4'-phosphoryl)serine modification is found at Ser1891. Disordered regions lie at residues 1932–1961 and 1994–2020; these read GQSA…DGVD and GGSS…KKNA. Composition is skewed to low complexity over residues 1934–1958 and 1996–2013; these read SASS…STND and SSSN…SSSS. The tract at residues 2066-2481 is condensation 2; sequence EDIYPATALQ…AVSCSDKETL (416 aa). The tract at residues 2504–2896 is adenylation 3; sequence RRTPHAPAVC…IGRRDGQLKL (393 aa). The Carrier 3 domain occupies 3032–3108; sequence RPVTSQEHEM…QLICHLNTIR (77 aa). The residue at position 3069 (Ser3069) is an O-(pantetheine 4'-phosphoryl)serine. Condensation stretches follow at residues 3125-3590 and 3611-4030; these read WVAL…TYDQ and NIYP…EHLV. Residues 4055–4445 are adenylation 4; that stretch reads HNSRQAVCAW…VGRKDNQIKF (391 aa). The Carrier 4 domain occupies 4579–4655; the sequence is MPSTAAERKM…DLSDQAKSLI (77 aa). Ser4616 bears the O-(pantetheine 4'-phosphoryl)serine mark. The segment at 4712–5097 is condensation 5; it reads IVVDIPGPID…KIVGLLRHPE (386 aa).

This sequence belongs to the NRP synthetase family.

Its pathway is secondary metabolite biosynthesis. Its function is as follows. Nonribosomal peptide synthetase; part of the gene cluster that mediates the biosynthesis of malformins, cyclic pentapeptides with a disulfide bond between 2 consecutive cysteins, that show potential anti-tumor as well as antimalarial and antitrypanosomal properties. The nonribosomal peptide synthetase mlfA is responsible of the formation of the cyclic pentapeptide. The malformin biosynthesis clusters in malformin-producing fungi also contain enzymes involved in the formation of the disulfide bond between the two consecutive cysteins within malformins, in addition to additional tailoring enzymes such as methyltransferases or oxidoreductases. They are also composed of up to 4 major facilitator superfamily transporters, and transcription factors probably involved in the regulation of the expression of those clusters. The chain is Malformin synthetase mlfA from Aspergillus kawachii (strain NBRC 4308) (White koji mold).